The sequence spans 335 residues: Eukaryotic translation initiation factor 3 subunit H-A (335 aa).

In terms of domain architecture, MPN spans 22-156; the sequence is IQVDGLVVLK…LKAYRLTPKL (135 aa). Residues 254-272 show a composition bias toward low complexity; the sequence is QQQKQQYQQRRQQENAQRQ. The disordered stretch occupies residues 254-282; sequence QQQKQQYQQRRQQENAQRQSRGEPPLPEE.

It belongs to the eIF-3 subunit H family. In terms of assembly, component of the eukaryotic translation initiation factor 3 (eIF-3) complex, which is composed of 13 subunits: eif3a, eif3b, eif3c, eif3d, eif3e, eif3f, eif3g, eif3h, eif3i, eif3j, eif3k, eif3l and eif3m.

It localises to the cytoplasm. Component of the eukaryotic translation initiation factor 3 (eIF-3) complex, which is involved in protein synthesis of a specialized repertoire of mRNAs and, together with other initiation factors, stimulates binding of mRNA and methionyl-tRNAi to the 40S ribosome. The eIF-3 complex specifically targets and initiates translation of a subset of mRNAs involved in cell proliferation. The polypeptide is Eukaryotic translation initiation factor 3 subunit H-A (eif3ha) (Danio rerio (Zebrafish)).